A 387-amino-acid polypeptide reads, in one-letter code: Flap endonuclease 1 (387 aa).

Positions 1-104 (MGILGLSKLI…GELAKRAERR (104 aa)) are N-domain. Asp34 serves as a coordination point for Mg(2+). DNA-binding residues include Arg47 and Arg70. Positions 86, 158, 160, 179, and 181 each coordinate Mg(2+). Residues 122-253 (GIEKFNRRLV…KRAIELINNY (132 aa)) are I-domain. Position 158 (Glu158) interacts with DNA. Residues Gly231 and Asp233 each coordinate DNA. A Mg(2+)-binding site is contributed by Asp233. Positions 336–344 (TQVRLDSFF) are interaction with PCNA. The tract at residues 346-387 (TLPSTPNATNAAKRKAEEAKKSANNKKAKTSGGVGGRGRRPK) is disordered.

This sequence belongs to the XPG/RAD2 endonuclease family. FEN1 subfamily. In terms of assembly, interacts with PCNA. Three molecules of FEN1 bind to one PCNA trimer with each molecule binding to one PCNA monomer. PCNA stimulates the nuclease activity without altering cleavage specificity. It depends on Mg(2+) as a cofactor. Phosphorylated. Phosphorylation upon DNA damage induces relocalization to the nuclear plasma.

The protein localises to the nucleus. It localises to the nucleolus. It is found in the nucleoplasm. Its subcellular location is the mitochondrion. Structure-specific nuclease with 5'-flap endonuclease and 5'-3' exonuclease activities involved in DNA replication and repair. During DNA replication, cleaves the 5'-overhanging flap structure that is generated by displacement synthesis when DNA polymerase encounters the 5'-end of a downstream Okazaki fragment. It enters the flap from the 5'-end and then tracks to cleave the flap base, leaving a nick for ligation. Also involved in the long patch base excision repair (LP-BER) pathway, by cleaving within the apurinic/apyrimidinic (AP) site-terminated flap. Acts as a genome stabilization factor that prevents flaps from equilibrating into structures that lead to duplications and deletions. Also possesses 5'-3' exonuclease activity on nicked or gapped double-stranded DNA, and exhibits RNase H activity. Also involved in replication and repair of rDNA and in repairing mitochondrial DNA. In Drosophila erecta (Fruit fly), this protein is Flap endonuclease 1.